The primary structure comprises 28 residues: M-poneritoxin-Dq4b/U1-poneritoxin-Dq4c/U1-poneritoxin-Dq4d (28 aa).

The residue at position 20 (M20) is a Methionine sulfoxide; in form U1-PONTX-Dq4d. A28 is subject to Alanine amide; in form Dq-1362 and U1-PONTX-Dq4d.

Occurs in 3 forms, M-PONTX-Dq4b has an amidated Ala-28, U1-PONTX-Dq4d has an amidated Ala-28 and an oxidized Met-20, U1-PONTX-Dq4c has no modifications at either Met-20 or Ala-28. Expressed by the venom gland.

It localises to the secreted. In terms of biological role, M-poneritoxin-Dq4b: this synthetic peptide has antimicrobial activity against Gram-positive bacteria B.amyloliquefacies S499 (MIC=0.1 mM), L.monocytogenes 2231 and S.aureus ATCC 29213, against Gram-negative bacteria P.putida BTP1, P.aeruginosa PaO1 and E.coli ATCC 10536, and against the fungi S.cerevisiae, R.mucilaginosa and C.cucumerinum. Not active against the fungi F.oxysporum and B.cinerea. The polypeptide is M-poneritoxin-Dq4b/U1-poneritoxin-Dq4c/U1-poneritoxin-Dq4d (Dinoponera quadriceps (South American ant)).